Reading from the N-terminus, the 567-residue chain is uncharacterized protein (567 aa).

It belongs to the protein kinase superfamily. ADCK protein kinase family.

This is an uncharacterized protein from Synechocystis sp. (strain ATCC 27184 / PCC 6803 / Kazusa).